Reading from the N-terminus, the 356-residue chain is Nicotinate-nucleotide--dimethylbenzimidazole phosphoribosyltransferase (356 aa).

The active-site Proton acceptor is glutamate 317.

This sequence belongs to the CobT family. As to quaternary structure, homodimer.

It carries out the reaction 5,6-dimethylbenzimidazole + nicotinate beta-D-ribonucleotide = alpha-ribazole 5'-phosphate + nicotinate + H(+). Its pathway is nucleoside biosynthesis; alpha-ribazole biosynthesis; alpha-ribazole from 5,6-dimethylbenzimidazole: step 1/2. Functionally, catalyzes the synthesis of alpha-ribazole-5'-phosphate from nicotinate mononucleotide (NAMN) and 5,6-dimethylbenzimidazole (DMB). The chain is Nicotinate-nucleotide--dimethylbenzimidazole phosphoribosyltransferase from Salmonella schwarzengrund (strain CVM19633).